A 305-amino-acid polypeptide reads, in one-letter code: Dihydroorotate dehydrogenase A (fumarate) (305 aa).

Residues Ser21 and 45–46 (KS) contribute to the FMN site. Residues Lys45, 69–73 (NAIGL), and Asn129 contribute to the substrate site. Asn129 serves as a coordination point for FMN. Residue Cys132 is the Nucleophile of the active site. 2 residues coordinate FMN: Lys167 and Ile193. Residue 194–195 (NT) coordinates substrate. FMN contacts are provided by residues Gly219 and 245–246 (GG).

The protein belongs to the dihydroorotate dehydrogenase family. Type 1 subfamily. As to quaternary structure, homodimer. Requires FMN as cofactor.

It localises to the cytoplasm. It carries out the reaction (S)-dihydroorotate + fumarate = orotate + succinate. It functions in the pathway pyrimidine metabolism; UMP biosynthesis via de novo pathway. Functionally, catalyzes the conversion of dihydroorotate to orotate with fumarate as the electron acceptor. The sequence is that of Dihydroorotate dehydrogenase A (fumarate) (pyrD) from Lactiplantibacillus plantarum (strain ATCC BAA-793 / NCIMB 8826 / WCFS1) (Lactobacillus plantarum).